The following is a 348-amino-acid chain: S-adenosylmethionine:tRNA ribosyltransferase-isomerase (348 aa).

This sequence belongs to the QueA family. Monomer.

It is found in the cytoplasm. It catalyses the reaction 7-aminomethyl-7-carbaguanosine(34) in tRNA + S-adenosyl-L-methionine = epoxyqueuosine(34) in tRNA + adenine + L-methionine + 2 H(+). Its pathway is tRNA modification; tRNA-queuosine biosynthesis. Functionally, transfers and isomerizes the ribose moiety from AdoMet to the 7-aminomethyl group of 7-deazaguanine (preQ1-tRNA) to give epoxyqueuosine (oQ-tRNA). The chain is S-adenosylmethionine:tRNA ribosyltransferase-isomerase from Cytophaga hutchinsonii (strain ATCC 33406 / DSM 1761 / CIP 103989 / NBRC 15051 / NCIMB 9469 / D465).